The primary structure comprises 429 residues: Phosphoribosylamine--glycine ligase (429 aa).

Positions 109 to 316 (KDFLARHNIP…LVELCLAACE (208 aa)) constitute an ATP-grasp domain. ATP is bound at residue 135–196 (LREKGAPIVI…EEFLDGEEAS (62 aa)). A disordered region spans residues 212 to 236 (SQDHKRVGDKDTGPNTGGMGAYSPA). A compositionally biased stretch (basic and acidic residues) spans 213–223 (QDHKRVGDKDT). Residues Glu-286 and Asn-288 each coordinate Mg(2+).

This sequence belongs to the GARS family. Monomer. The cofactor is Mg(2+). Requires Mn(2+) as cofactor.

The enzyme catalyses 5-phospho-beta-D-ribosylamine + glycine + ATP = N(1)-(5-phospho-beta-D-ribosyl)glycinamide + ADP + phosphate + H(+). It functions in the pathway purine metabolism; IMP biosynthesis via de novo pathway; N(1)-(5-phospho-D-ribosyl)glycinamide from 5-phospho-alpha-D-ribose 1-diphosphate: step 2/2. The polypeptide is Phosphoribosylamine--glycine ligase (Escherichia coli O6:H1 (strain CFT073 / ATCC 700928 / UPEC)).